We begin with the raw amino-acid sequence, 624 residues long: Histone-lysine N-methyltransferase, H3 lysine-9 specific SUVH4 (624 aa).

2 disordered regions span residues 1-25 (MAGK…VQKV) and 54-86 (DDTE…KGKQ). The region spanning 149-302 (GDLPGIDVGH…FTVYKYRLKR (154 aa)) is the YDG domain. The region spanning 381 to 443 (TGCNCRGSCT…KCVNRTSQKR (63 aa)) is the Pre-SET domain. 9 residues coordinate Zn(2+): Cys383, Cys385, Cys389, Cys395, Cys397, Cys425, Cys429, Cys431, and Cys435. One can recognise an SET domain in the interval 446-594 (FNLEVFRSAK…PMQELTYDYG (149 aa)). S-adenosyl-L-methionine-binding positions include 456-458 (KGW), Tyr493, Arg548, and 551-552 (NH). Zn(2+) is bound by residues Cys554, Cys612, Cys614, and Cys619. In terms of domain architecture, Post-SET spans 608–624 (KQLACYCGALNCRKRLY).

This sequence belongs to the class V-like SAM-binding methyltransferase superfamily. Histone-lysine methyltransferase family. Suvar3-9 subfamily. In terms of assembly, interacts with H3 histone. In terms of tissue distribution, expressed in leaves stems and flowers.

Its subcellular location is the nucleus. It is found in the chromosome. The protein resides in the centromere. It catalyses the reaction N(6)-methyl-L-lysyl(9)-[histone H3] + S-adenosyl-L-methionine = N(6),N(6)-dimethyl-L-lysyl(9)-[histone H3] + S-adenosyl-L-homocysteine + H(+). It carries out the reaction L-lysyl(9)-[histone H3] + S-adenosyl-L-methionine = N(6)-methyl-L-lysyl(9)-[histone H3] + S-adenosyl-L-homocysteine + H(+). Functionally, histone methyltransferase. Methylates 'Lys-9' of histone H3. H3 'Lys-9' methylation represents a specific tag for epigenetic transcriptional repression. The silencing mechanism via DNA CpNpG methylation requires the targeting of chromomethylase CMT3 to methylated histones, probably through an interaction with an HP1-like adapter. By its function, KYP is directly required for the maintenance of the DNA CpNpG and asymmetric methylation. Involved in the silencing of transposable elements. In Arabidopsis thaliana (Mouse-ear cress), this protein is Histone-lysine N-methyltransferase, H3 lysine-9 specific SUVH4 (SUVH4).